We begin with the raw amino-acid sequence, 221 residues long: Ribonuclease 3 (221 aa).

In terms of domain architecture, RNase III spans 4 to 121 (LEQLEKKLGY…LWAAVYIDSG (118 aa)). Position 40 (Glu40) interacts with Mg(2+). Asp44 is an active-site residue. Positions 107 and 110 each coordinate Mg(2+). Glu110 is a catalytic residue. One can recognise a DRBM domain in the interval 151–219 (DYKTILQEIT…AEELIKLLEE (69 aa)).

Belongs to the ribonuclease III family. As to quaternary structure, homodimer. Requires Mg(2+) as cofactor.

The protein resides in the cytoplasm. It carries out the reaction Endonucleolytic cleavage to 5'-phosphomonoester.. In terms of biological role, digests double-stranded RNA. Involved in the processing of primary rRNA transcript to yield the immediate precursors to the large and small rRNAs (23S and 16S). Also processes some mRNAs, and tRNAs when they are encoded in the rRNA operon. Probably processes pre-crRNA and tracrRNA of type II CRISPR loci if present in the organism. In Aquifex aeolicus (strain VF5), this protein is Ribonuclease 3 (rnc).